The following is a 179-amino-acid chain: Alkyl hydroperoxide reductase AhpD (179 aa).

Catalysis depends on cysteine 130, which acts as the Proton donor. An intrachain disulfide couples cysteine 130 to cysteine 133. Residue cysteine 133 is the Cysteine sulfenic acid (-SOH) intermediate of the active site.

It belongs to the AhpD family. Homotrimer.

The catalysed reaction is N(6)-[(R)-dihydrolipoyl]-L-lysyl-[lipoyl-carrier protein] + a hydroperoxide = N(6)-[(R)-lipoyl]-L-lysyl-[lipoyl-carrier protein] + an alcohol + H2O. Functionally, antioxidant protein with alkyl hydroperoxidase activity. Required for the reduction of the AhpC active site cysteine residues and for the regeneration of the AhpC enzyme activity. This is Alkyl hydroperoxide reductase AhpD from Nocardia farcinica (strain IFM 10152).